Consider the following 255-residue polypeptide: Alpha-acetolactate decarboxylase (255 aa).

Belongs to the alpha-acetolactate decarboxylase family.

The enzyme catalyses (2S)-2-acetolactate + H(+) = (R)-acetoin + CO2. The protein operates within polyol metabolism; (R,R)-butane-2,3-diol biosynthesis; (R,R)-butane-2,3-diol from pyruvate: step 2/3. Functionally, converts acetolactate into acetoin, which can be excreted by the cells. This may be a mechanism for controlling the internal pH of cells in the stationary stage. The chain is Alpha-acetolactate decarboxylase (alsD) from Bacillus subtilis (strain 168).